A 425-amino-acid chain; its full sequence is Dihydroorotase (425 aa).

Zn(2+)-binding residues include His-56 and His-58. Residues 58-60 (HYR) and Asn-90 each bind substrate. Zn(2+)-binding residues include Asp-148, His-175, and His-228. Asn-274 contributes to the substrate binding site. Asp-301 provides a ligand contact to Zn(2+). Residue Asp-301 is part of the active site. Substrate contacts are provided by residues His-305 and 319 to 320 (FG).

This sequence belongs to the metallo-dependent hydrolases superfamily. DHOase family. Class I DHOase subfamily. Zn(2+) is required as a cofactor.

The catalysed reaction is (S)-dihydroorotate + H2O = N-carbamoyl-L-aspartate + H(+). It functions in the pathway pyrimidine metabolism; UMP biosynthesis via de novo pathway; (S)-dihydroorotate from bicarbonate: step 3/3. Functionally, catalyzes the reversible cyclization of carbamoyl aspartate to dihydroorotate. This chain is Dihydroorotase, found in Lactobacillus johnsonii (strain CNCM I-12250 / La1 / NCC 533).